A 1128-amino-acid chain; its full sequence is MQGAQTSEDNLGSQSQPGPCGYIYFYPLATYPLREVATLGTGYAGHRCLTVPLLCGITVEPGFSINVKALHRRPDPNCGLLRATSYHRDIYVFHNAHMVPPIFEGPGLEALCGETREVFGYDAYSALPRESSKPGDFFPEGLDPSAYLGAVAITEAFKERLYSGNLVAIPSLKQEVAVGQSASVRVPLYDKEVFPEGVPQLRQFYNSDLSRCMHEALYTGLAQALRVRRVGKLVELLEKQSLQDQAKVAKVAPLKEFPASTISHPDSGALMIVDSAACELAVSYAPAMLEASHETPASLNYDSWPLFADCEGPEARVAALHRYNASLAPHVSTQIFATNSVLYVSGVSKSTGQGKESLFNSFYMTHGLGTLQEGTWDPCRRPCFSGWGGPDVTGTNGPGNYAVEHLVYAASFSPNLLARYAYYLQFCQGQKSSLTPVPETGSYVAGAAASPMCSLCEGRAPAVCLNTLFFRLRDRFPPVMSTQRRDPYVISGASGSYNETDFLGNFLNFIDKEDDGQRPDDEPRYTYWQLNQNLLERLSRLGIDAEGKLEKEPHGPRDFVKMFKDVDAAVDAEVVQFMNSMAKNNITYKDLVKSCYHVMQYSCNPFAQPACPIFTQLFYRSLLTILQDISLPICMCYENDNPGLGQSPPEWLKGHYQTLCTNFRSLAIDKGVLTAKEAKVVHGEPTCDLPDLDAALQGRVYGRRLPVRMSKVLMLCPRNIKIKNRVVFTGENAALQNSFIKSTTRRENYIINGPYMKFLNTYHKTLFPDTKLSSLYLWHNFSRRRSVPVPSGASAEEYSDLALFVDGGSRAHEESNVIDVVPGNLVTYAKQRLNNAILKACGQTQFYISLIQGLVPRTQSVPARDYPHVLGTRAVESAAAYAEATSSLTATTVVCAATDCLSQVCKARPVVTLPVTINKYTGVNGNNQIFQAGNLGYFMGRGVDRNLLQAPGAGLRKQAGGSSMRKKFVFATPTLGLTVKRRTQAATTYEIENIRAGLEAIISQKQEEDCVFDVVCNLVDAMGEACASLTRDDAEYLLGRFSVLADSVLETLATIASSGIEWTAEAARDFLEGVWGGPGAAQDNFISVAEPVSTASQASAGLLLGGGGQGSGGRRKRRLATVLPGLEV.

Positions 1104 to 1128 are required for nuclear localization; the sequence is LGGGGQGSGGRRKRRLATVLPGLEV.

It belongs to the herpesviridae major DNA-binding protein family. Homooligomers. Forms double-helical filaments necessary for the formation of replication compartments within the host nucleus. Interacts with the origin-binding protein. Interacts with the helicase primase complex; this interaction stimulates primer synthesis activity of the helicase-primase complex. Interacts with the DNA polymerase. Interacts with the alkaline exonuclease; this interaction increases its nuclease processivity.

The protein localises to the virion tegument. It is found in the host nucleus. Plays several crucial roles in viral infection. Participates in the opening of the viral DNA origin to initiate replication by interacting with the origin-binding protein. May disrupt loops, hairpins and other secondary structures present on ssDNA to reduce and eliminate pausing of viral DNA polymerase at specific sites during elongation. Promotes viral DNA recombination by performing strand-transfer, characterized by the ability to transfer a DNA strand from a linear duplex to a complementary single-stranded DNA circle. Can also catalyze the renaturation of complementary single strands. Additionally, reorganizes the host cell nucleus, leading to the formation of prereplicative sites and replication compartments. This process is driven by the protein which can form double-helical filaments in the absence of DNA. In Homo sapiens (Human), this protein is Major DNA-binding protein.